We begin with the raw amino-acid sequence, 487 residues long: b(0,+)-type amino acid transporter 1 (487 aa).

The segment covering 1–15 has biased composition (basic and acidic residues); sequence MGDTGLRKRREDEKS. Residues 1–22 are disordered; that stretch reads MGDTGLRKRREDEKSIQSQEPK. Topologically, residues 1–31 are cytoplasmic; that stretch reads MGDTGLRKRREDEKSIQSQEPKTTSLQKELG. S18 carries the phosphoserine modification. A helical transmembrane segment spans residues 32-55; the sequence is LISGISIIVGTIIGSGIFVSPKSV. 43 to 47 provides a ligand contact to L-arginine; that stretch reads IIGSG. Residues 56-62 lie on the Extracellular side of the membrane; that stretch reads LSNTEAV. Residues 63-84 form a helical membrane-spanning segment; the sequence is GPCLIIWAACGVLATLGALCFA. The Cytoplasmic segment spans residues 85 to 110; it reads ELGTMITKSGGEYPYLMEAYGPIPAY. A helical membrane pass occupies residues 111–137; sequence LFSWASLIVIKPTSFAIICLSFSEYVC. The Extracellular segment spans residues 138–147; that stretch reads APFYVGCKPP. 2 helical membrane-spanning segments follow: residues 148-169 and 170-193; these read QIVVKCLAAAAILFISTVNSLS and VRLGSYVQNIFTAAKLVIVAIIII. Topologically, residues 194-217 are extracellular; it reads SGLVLLAQGNTKNFDNSFEGAQLS. Residues 218–238 form a helical membrane-spanning segment; the sequence is VGAISLAFYNGLWAYDGWNQL. Residue D233 coordinates L-arginine. The Cytoplasmic portion of the chain corresponds to 239-251; the sequence is NYITEELRNPYRN. Residues 252–274 form a helical membrane-spanning segment; that stretch reads LPLAIIIGIPLVTACYILMNVSY. At 275–302 the chain is on the extracellular side; the sequence is FTVMTATELLQSQAVAVTFGDRVLYPAS. Residues 303–325 traverse the membrane as a helical segment; it reads WIVPLFVAFSTIGAANGTCFTAG. Topologically, residues 326–351 are cytoplasmic; that stretch reads RLIYVAGREGHMLKVLSYISVRRLTP. 2 consecutive transmembrane segments (helical) span residues 352 to 370 and 371 to 391; these read APAIIFYGIIATIYIIPGD and INSLVNYFSFAAWLFYGLTIL. Over 392–410 the chain is Cytoplasmic; it reads GLIVMRFTRKELERPIKVP. Residues 411–431 traverse the membrane as a helical segment; the sequence is VVIPVLMTLISVFLVLAPIIS. At 432-434 the chain is on the extracellular side; sequence KPT. A helical transmembrane segment spans residues 435 to 450; that stretch reads WEYLYCVLFILSGLLF. The Cytoplasmic segment spans residues 451 to 487; sequence YFLFVHYKFGWAQKISKPITMHLQMLMEVVPPEEDPE.

Belongs to the amino acid-polyamine-organocation (APC) superfamily. In terms of assembly, disulfide-linked heterodimer composed of the catalytic light chain subunit SLC7A9 and the heavy chain subunit SLC3A1. The heterodimer is the minimal functional unit. Assembles in heterotetramers (dimers of heterodimers) and higher order oligomers; the oligomerization is mediated by SLC3A1 likely to prevent degradation and facilitate heteromer trafficking to the plasma membrane. Interacts with CAV1. In terms of tissue distribution, expressed in the brush border membrane in the kidney (at protein level). Kidney, small intestine, liver and placenta.

The protein localises to the apical cell membrane. It localises to the cell membrane. It catalyses the reaction L-leucine(out) + L-arginine(in) = L-leucine(in) + L-arginine(out). The enzyme catalyses L-histidine(out) + L-arginine(in) = L-histidine(in) + L-arginine(out). It carries out the reaction L-arginine(in) + L-phenylalanine(out) = L-arginine(out) + L-phenylalanine(in). The catalysed reaction is L-cysteine(out) + L-arginine(in) = L-cysteine(in) + L-arginine(out). It catalyses the reaction L-cystine(out) + L-arginine(in) = L-cystine(in) + L-arginine(out). The enzyme catalyses L-lysine(out) + L-arginine(in) = L-lysine(in) + L-arginine(out). Its function is as follows. Associates with SLC3A1 to form a functional transporter complex that mediates the electrogenic exchange between cationic amino acids and neutral amino acids, with a stoichiometry of 1:1. Has system b(0,+)-like activity with high affinity for extracellular cationic amino acids and L-cystine and lower affinity for intracellular neutral amino acids. Substrate exchange is driven by high concentration of intracellular neutral amino acids and the intracellular reduction of L-cystine to L-cysteine. Required for reabsorption of L-cystine and dibasic amino acids across the brush border membrane in renal proximal tubules. This Homo sapiens (Human) protein is b(0,+)-type amino acid transporter 1.